Here is a 248-residue protein sequence, read N- to C-terminus: 2,3-bisphosphoglycerate-dependent phosphoglycerate mutase (248 aa).

Substrate-binding positions include 8 to 15 (RHGESTWN), 21 to 22 (TG), R60, 87 to 90 (ERHY), K98, 114 to 115 (RR), and 183 to 184 (GN). The active-site Tele-phosphohistidine intermediate is H9. E87 serves as the catalytic Proton donor/acceptor.

This sequence belongs to the phosphoglycerate mutase family. BPG-dependent PGAM subfamily. In terms of assembly, homodimer.

The enzyme catalyses (2R)-2-phosphoglycerate = (2R)-3-phosphoglycerate. It functions in the pathway carbohydrate degradation; glycolysis; pyruvate from D-glyceraldehyde 3-phosphate: step 3/5. Functionally, catalyzes the interconversion of 2-phosphoglycerate and 3-phosphoglycerate. In Burkholderia lata (strain ATCC 17760 / DSM 23089 / LMG 22485 / NCIMB 9086 / R18194 / 383), this protein is 2,3-bisphosphoglycerate-dependent phosphoglycerate mutase.